The chain runs to 92 residues: MARSVKKGPFLDDFLVKKVDVLREGSRKELIKTWSRRSTIIHEFVGYTFGVHNGRKFIPVLVTENMVGHKLGEFAPTRTYYGHGVDKKAKRR.

Belongs to the universal ribosomal protein uS19 family.

Functionally, protein S19 forms a complex with S13 that binds strongly to the 16S ribosomal RNA. This is Small ribosomal subunit protein uS19 from Magnetococcus marinus (strain ATCC BAA-1437 / JCM 17883 / MC-1).